Reading from the N-terminus, the 393-residue chain is S-adenosylmethionine synthase (393 aa).

His-16 contacts ATP. Position 18 (Asp-18) interacts with Mg(2+). Glu-44 lines the K(+) pocket. L-methionine contacts are provided by Glu-57 and Gln-100. Residues 100–110 (QSNDIAQGVDH) are flexible loop. ATP is bound by residues 167–169 (DAK), 238–239 (RF), Asp-247, 253–254 (RK), Ala-270, and Lys-274. Asp-247 is a binding site for L-methionine. Lys-278 lines the L-methionine pocket.

The protein belongs to the AdoMet synthase family. Homotetramer; dimer of dimers. The cofactor is Mg(2+). Requires K(+) as cofactor.

The protein resides in the cytoplasm. It carries out the reaction L-methionine + ATP + H2O = S-adenosyl-L-methionine + phosphate + diphosphate. The protein operates within amino-acid biosynthesis; S-adenosyl-L-methionine biosynthesis; S-adenosyl-L-methionine from L-methionine: step 1/1. In terms of biological role, catalyzes the formation of S-adenosylmethionine (AdoMet) from methionine and ATP. The overall synthetic reaction is composed of two sequential steps, AdoMet formation and the subsequent tripolyphosphate hydrolysis which occurs prior to release of AdoMet from the enzyme. This Variovorax paradoxus (strain S110) protein is S-adenosylmethionine synthase.